Consider the following 172-residue polypeptide: Cell division protein SepF (172 aa).

Residues 18-73 (RRYDEEDLPDEELTTEVYSDDGYEPSSEVTQLHHHDSNEQHARGHKAVQHRRRSEL) are disordered. The segment covering 22 to 40 (EEDLPDEELTTEVYSDDGY) has biased composition (acidic residues). The span at 48 to 59 (QLHHHDSNEQHA) shows a compositional bias: basic and acidic residues. The segment covering 60 to 70 (RGHKAVQHRRR) has biased composition (basic residues).

This sequence belongs to the SepF family. Homodimer. Interacts with FtsZ.

The protein localises to the cytoplasm. Its function is as follows. Cell division protein that is part of the divisome complex and is recruited early to the Z-ring. Probably stimulates Z-ring formation, perhaps through the cross-linking of FtsZ protofilaments. Its function overlaps with FtsA. This Cutibacterium acnes (strain DSM 16379 / KPA171202) (Propionibacterium acnes) protein is Cell division protein SepF.